The chain runs to 90 residues: uncharacterized protein (90 aa).

The next 2 membrane-spanning stretches (helical) occupy residues 23–43 and 48–68; these read ITTI…VGLF and VTLL…IIGF.

Its subcellular location is the cell membrane. This is an uncharacterized protein from Rickettsia prowazekii (strain Madrid E).